Here is a 1027-residue protein sequence, read N- to C-terminus: Translation initiation factor IF-2 (1027 aa).

Positions 31–433 (YVKSASSTVE…GGVRLPRGNG (403 aa)) are disordered. A compositionally biased stretch (gly residues) spans 57-68 (KKGGGDSNGRAG). Over residues 110–122 (GPKPGPKPGPKAP) the composition is skewed to pro residues. Over residues 123-145 (APETKPFEEAPAPAAKADAPAQP) the composition is skewed to low complexity. Over residues 148-171 (EQPRSEQPRSEQPRSEQPRSERSG) the composition is skewed to basic and acidic residues. Composition is skewed to pro residues over residues 174–188 (PGGP…PKPG) and 201–212 (PPKPQSPKPGPR). Residues 237 to 268 (PGGGQRQGGQGPGRGGPQGGRPDRQGGGGQGA) are compositionally biased toward gly residues. The segment covering 293-302 (GMMPPRPNPG) has biased composition (pro residues). Gly residues predominate over residues 311–397 (SGGGPGGGRG…GAAGAFGRPG (87 aa)). Basic residues predominate over residues 401–410 (RRGRKSKRQK). Residues 523 to 695 (SRPPVVTVMG…ILLTADATLD (173 aa)) form the tr-type G domain. Residues 532 to 539 (GHVDHGKT) are G1. Position 532–539 (532–539 (GHVDHGKT)) interacts with GTP. Residues 557–561 (GITQH) form a G2 region. The G3 stretch occupies residues 582–585 (DTPG). GTP contacts are provided by residues 582–586 (DTPGH) and 636–639 (NKID). The interval 636 to 639 (NKID) is G4. Positions 672–674 (SAR) are G5.

It belongs to the TRAFAC class translation factor GTPase superfamily. Classic translation factor GTPase family. IF-2 subfamily.

The protein resides in the cytoplasm. In terms of biological role, one of the essential components for the initiation of protein synthesis. Protects formylmethionyl-tRNA from spontaneous hydrolysis and promotes its binding to the 30S ribosomal subunits. Also involved in the hydrolysis of GTP during the formation of the 70S ribosomal complex. In Saccharopolyspora erythraea (strain ATCC 11635 / DSM 40517 / JCM 4748 / NBRC 13426 / NCIMB 8594 / NRRL 2338), this protein is Translation initiation factor IF-2.